We begin with the raw amino-acid sequence, 222 residues long: Sugar fermentation stimulation protein homolog (222 aa).

The protein belongs to the SfsA family.

In Thermotoga neapolitana (strain ATCC 49049 / DSM 4359 / NBRC 107923 / NS-E), this protein is Sugar fermentation stimulation protein homolog.